Here is a 450-residue protein sequence, read N- to C-terminus: Glutamyl-tRNA(Gln) amidotransferase subunit A, mitochondrial (450 aa).

Residues Lys47 and Ser122 each act as charge relay system in the active site. Residue Ser146 is the Acyl-ester intermediate of the active site.

Belongs to the amidase family. GatA subfamily. As to quaternary structure, subunit of the heterotrimeric GatFAB amidotransferase (AdT) complex, composed of A, B and F subunits.

Its subcellular location is the mitochondrion. It carries out the reaction L-glutamyl-tRNA(Gln) + L-glutamine + ATP + H2O = L-glutaminyl-tRNA(Gln) + L-glutamate + ADP + phosphate + H(+). Allows the formation of correctly charged Gln-tRNA(Gln) through the transamidation of misacylated Glu-tRNA(Gln) in the mitochondria. The reaction takes place in the presence of glutamine and ATP through an activated gamma-phospho-Glu-tRNA(Gln). This chain is Glutamyl-tRNA(Gln) amidotransferase subunit A, mitochondrial, found in Candida albicans (strain SC5314 / ATCC MYA-2876) (Yeast).